A 1396-amino-acid chain; its full sequence is DNA-directed RNA polymerase subunit beta' (1396 aa).

Zn(2+) contacts are provided by cysteine 70, cysteine 72, cysteine 85, and cysteine 88. Positions 460, 462, and 464 each coordinate Mg(2+). Zn(2+) is bound by residues cysteine 814, cysteine 888, cysteine 895, and cysteine 898.

The protein belongs to the RNA polymerase beta' chain family. The RNAP catalytic core consists of 2 alpha, 1 beta, 1 beta' and 1 omega subunit. When a sigma factor is associated with the core the holoenzyme is formed, which can initiate transcription. Mg(2+) serves as cofactor. Requires Zn(2+) as cofactor.

It carries out the reaction RNA(n) + a ribonucleoside 5'-triphosphate = RNA(n+1) + diphosphate. In terms of biological role, DNA-dependent RNA polymerase catalyzes the transcription of DNA into RNA using the four ribonucleoside triphosphates as substrates. The sequence is that of DNA-directed RNA polymerase subunit beta' from Chromobacterium violaceum (strain ATCC 12472 / DSM 30191 / JCM 1249 / CCUG 213 / NBRC 12614 / NCIMB 9131 / NCTC 9757 / MK).